Here is a 122-residue protein sequence, read N- to C-terminus: Large ribosomal subunit protein uL14c (122 aa).

The protein belongs to the universal ribosomal protein uL14 family. As to quaternary structure, part of the 50S ribosomal subunit.

It is found in the plastid. The protein resides in the chloroplast. Functionally, binds to 23S rRNA. This is Large ribosomal subunit protein uL14c from Ipomoea purpurea (Common morning glory).